The following is a 139-amino-acid chain: Holo-[acyl-carrier-protein] synthase (139 aa).

Residues Asp8 and Glu57 each contribute to the Mg(2+) site.

This sequence belongs to the P-Pant transferase superfamily. AcpS family. Mg(2+) is required as a cofactor.

It localises to the cytoplasm. It catalyses the reaction apo-[ACP] + CoA = holo-[ACP] + adenosine 3',5'-bisphosphate + H(+). Functionally, transfers the 4'-phosphopantetheine moiety from coenzyme A to a Ser of acyl-carrier-protein. This chain is Holo-[acyl-carrier-protein] synthase, found in Rhizobium meliloti (strain 1021) (Ensifer meliloti).